We begin with the raw amino-acid sequence, 467 residues long: Argininosuccinate lyase (467 aa).

This sequence belongs to the lyase 1 family. Argininosuccinate lyase subfamily.

It localises to the cytoplasm. The catalysed reaction is 2-(N(omega)-L-arginino)succinate = fumarate + L-arginine. The protein operates within amino-acid biosynthesis; L-arginine biosynthesis; L-arginine from L-ornithine and carbamoyl phosphate: step 3/3. The protein is Argininosuccinate lyase of Anaeromyxobacter sp. (strain K).